A 95-amino-acid chain; its full sequence is Gas vesicle protein S (95 aa).

The protein belongs to the gas vesicle GvpA family.

The protein resides in the gas vesicle. In terms of biological role, probably a minor component of the gas vesicle. It is not clear what function gas vesicles perform in soil bacteria. Its function is as follows. When a minimal gvp locus (gvpA2-gvpR-gvpN-gvpF-gvpG-gvpL-gvpS-gvpK-gvpJ-gvpT-gvpU, called pNL29) is expressed in E.coli gas vesicles are made. This is Gas vesicle protein S from Priestia megaterium (Bacillus megaterium).